Consider the following 258-residue polypeptide: Uroplakin-1a (258 aa).

The Cytoplasmic portion of the chain corresponds to 1–14 (MASAAAATTEKGSP). The helical transmembrane segment at 15-35 (VVVGLLVMGNIIILLSGLALF) threads the bilayer. Topologically, residues 36–59 (AETVWVTADQYRIYPLMGVSGKDD) are extracellular. The helical transmembrane segment at 60 to 86 (VFAGAWIAIFCGFSFFVVASFGVGAAL) threads the bilayer. Residues 87-91 (CRRRS) are Cytoplasmic-facing. The chain crosses the membrane as a helical span at residues 92–112 (MILTYLILMLIIYIFECASCI). Residues 113–230 (TSYTHRDYMV…HIGHAIDSYT (118 aa)) are Extracellular-facing. The N-linked (GlcNAc...) asparagine glycan is linked to asparagine 170. A helical membrane pass occupies residues 231 to 252 (WGISWFGFAILMWTLPVMLIAM). The Cytoplasmic segment spans residues 253 to 258 (YFYTTL).

This sequence belongs to the tetraspanin (TM4SF) family. In terms of assembly, homodimer; disulfide-linked. Interacts with uroplakin-2 (UPK2). The N-terminus is blocked. Post-translationally, N-glycosylated with high-mannose oligosaccharides. In terms of tissue distribution, bladder epithelium.

It is found in the membrane. In terms of biological role, component of the asymmetric unit membrane (AUM); a highly specialized biomembrane elaborated by terminally differentiated urothelial cells. May play an important role in normal bladder epithelial physiology, possibly in regulating membrane permeability of superficial umbrella cells or in stabilizing the apical membrane through AUM/cytoskeletal interactions. This chain is Uroplakin-1a (UPK1A), found in Bos taurus (Bovine).